The sequence spans 84 residues: Dihydroneopterin aldolase (84 aa).

Residues Glu22, Tyr54, and 73–74 (IE) each bind substrate.

Belongs to the DHNA family.

The catalysed reaction is 7,8-dihydroneopterin = 6-hydroxymethyl-7,8-dihydropterin + glycolaldehyde. It catalyses the reaction 7,8-dihydroneopterin = 7,8-dihydromonapterin. It functions in the pathway cofactor biosynthesis; tetrahydrofolate biosynthesis; 2-amino-4-hydroxy-6-hydroxymethyl-7,8-dihydropteridine diphosphate from 7,8-dihydroneopterin triphosphate: step 3/4. Functionally, catalyzes the conversion of 7,8-dihydroneopterin to 6-hydroxymethyl-7,8-dihydropterin. Can also catalyze the epimerization of carbon 2' of dihydroneopterin to dihydromonapterin. The polypeptide is Dihydroneopterin aldolase (folB) (Staphylococcus haemolyticus).